A 372-amino-acid chain; its full sequence is 4-hydroxy-3-methylbut-2-en-1-yl diphosphate synthase (flavodoxin) (372 aa).

[4Fe-4S] cluster-binding residues include cysteine 270, cysteine 273, cysteine 305, and glutamate 312.

This sequence belongs to the IspG family. The cofactor is [4Fe-4S] cluster.

It carries out the reaction (2E)-4-hydroxy-3-methylbut-2-enyl diphosphate + oxidized [flavodoxin] + H2O + 2 H(+) = 2-C-methyl-D-erythritol 2,4-cyclic diphosphate + reduced [flavodoxin]. It functions in the pathway isoprenoid biosynthesis; isopentenyl diphosphate biosynthesis via DXP pathway; isopentenyl diphosphate from 1-deoxy-D-xylulose 5-phosphate: step 5/6. Converts 2C-methyl-D-erythritol 2,4-cyclodiphosphate (ME-2,4cPP) into 1-hydroxy-2-methyl-2-(E)-butenyl 4-diphosphate. The chain is 4-hydroxy-3-methylbut-2-en-1-yl diphosphate synthase (flavodoxin) from Escherichia coli O8 (strain IAI1).